A 484-amino-acid polypeptide reads, in one-letter code: Aldehyde dehydrogenase family 3 member H1 (484 aa).

Residue 196 to 201 participates in NAD(+) binding; that stretch reads GSSKIG. E218 serves as the catalytic Proton acceptor. C253 functions as the Nucleophile in the catalytic mechanism.

The protein belongs to the aldehyde dehydrogenase family. Homodimer and homomultimer. As to expression, isoform alpha is expressed in expanded leaves and flowers. Detected in seedlings. Isoform beta is mainly expressed in flowers. Detected in leaves and seedlings.

It carries out the reaction an aldehyde + NAD(+) + H2O = a carboxylate + NADH + 2 H(+). Thiol-based regulation. Inactivation after dimerization under oxidizing conditions. Involved in oxidative stress tolerance by detoxifying reactive aldehydes derived from lipid peroxidation. Medium- to long-chain saturated aldehydes are preferred substrates, while the short-chain aldehyde propanal is a weak substrate. Is strictely NAD(+) specific. The polypeptide is Aldehyde dehydrogenase family 3 member H1 (ALDH3H1) (Arabidopsis thaliana (Mouse-ear cress)).